A 152-amino-acid chain; its full sequence is Nucleoplasmin-like protein (152 aa).

The segment covering 109–128 (EVVDMEEDDEEDDVAEDEED) has biased composition (acidic residues). Residues 109-152 (EVVDMEEDDEEDDVAEDEEDEHPKKRAKIENAADGKNAKNNKKK) form a disordered region. The segment covering 136–145 (KIENAADGKN) has biased composition (basic and acidic residues).

It belongs to the nucleoplasmin family. In terms of assembly, decamer formed by two pentameric rings associated in a head-to-head fashion.

It is found in the nucleus. Its function is as follows. Binds to core histones and functions in the ATP-facilitated assembly of approximately regularly spaced nucleosomal arrays. May participate in parallel with other histone-binding proteins such as NAP-1. In terms of biological role, inactive for chromatin assembly. In vitro it appears to form a high molecular mass aggregate with the core histones. The polypeptide is Nucleoplasmin-like protein (Nlp) (Drosophila melanogaster (Fruit fly)).